The chain runs to 203 residues: Auxin-responsive protein IAA4 (203 aa).

The tract at residues 1-31 (MEECKGGGMSPSSSMDSSTHPALSTTSSAAT) is disordered. Residues 10 to 31 (SPSSSMDSSTHPALSTTSSAAT) are compositionally biased toward low complexity. Positions 40–44 (LRLGL) match the EAR-like (transcriptional repression) motif. The 95-residue stretch at 108–202 (TLFVKVYMEG…KKLRIARMDK (95 aa)) folds into the PB1 domain.

This sequence belongs to the Aux/IAA family. As to quaternary structure, homodimers and heterodimers.

Its subcellular location is the nucleus. In terms of biological role, aux/IAA proteins are short-lived transcriptional factors that function as repressors of early auxin response genes at low auxin concentrations. This Oryza sativa subsp. japonica (Rice) protein is Auxin-responsive protein IAA4 (IAA4).